The sequence spans 35 residues: Beta-amanitin proprotein (35 aa).

Residues 1-10 (MSDINATRLP) constitute a propeptide that is removed on maturation. Positions 11–18 (IWGIGCDP) form a cross-link, cyclopeptide (Ile-Pro). A cross-link (2'-cysteinyl-6'-hydroxytryptophan sulfoxide (Trp-Cys)) is located at residues 12 to 16 (WGIGC). Residues 19–35 (CVGDDVTALLTRGEALC) constitute a propeptide that is removed on maturation.

The protein belongs to the MSDIN fungal toxin family. Post-translationally, processed by the macrocyclase-peptidase enzyme POPB to yield a toxic cyclic octapeptide. POPB first removes 10 residues from the N-terminus. Conformational trapping of the remaining peptide forces the enzyme to release this intermediate rather than proceed to macrocyclization. The enzyme rebinds the remaining peptide in a different conformation and catalyzes macrocyclization of the N-terminal 8 residues. Expressed in basidiocarps.

Functionally, toxin belonging to the bicyclic octapeptides amatoxins that acts by binding non-competitively to RNA polymerase II and greatly slowing the elongation of transcripts from target promoters. The chain is Beta-amanitin proprotein from Amanita exitialis (Guangzhou destroying angel).